A 151-amino-acid chain; its full sequence is Large ribosomal subunit protein bL9 (151 aa).

It belongs to the bacterial ribosomal protein bL9 family.

Its function is as follows. Binds to the 23S rRNA. The protein is Large ribosomal subunit protein bL9 of Francisella tularensis subsp. novicida (strain U112).